Reading from the N-terminus, the 304-residue chain is D-alanine--D-alanine ligase (304 aa).

An ATP-grasp domain is found at 103–299; sequence KLIWQALGLP…FADLCIEILK (197 aa). ATP is bound at residue 129–184; that stretch reads EEKLGLPMFVKPAAEGSSVGVVKVKGKGRLKSVYEELKHLQGEIIAERFIGGGEYS. Residues Asp-253, Glu-266, and Asn-268 each coordinate Mg(2+).

This sequence belongs to the D-alanine--D-alanine ligase family. The cofactor is Mg(2+). Mn(2+) is required as a cofactor.

The protein resides in the cytoplasm. It catalyses the reaction 2 D-alanine + ATP = D-alanyl-D-alanine + ADP + phosphate + H(+). It functions in the pathway cell wall biogenesis; peptidoglycan biosynthesis. Its function is as follows. Cell wall formation. The sequence is that of D-alanine--D-alanine ligase from Neisseria meningitidis serogroup B (strain ATCC BAA-335 / MC58).